The sequence spans 100 residues: Large ribosomal subunit protein uL23 (100 aa).

It belongs to the universal ribosomal protein uL23 family. Part of the 50S ribosomal subunit. Contacts protein L29, and trigger factor when it is bound to the ribosome.

In terms of biological role, one of the early assembly proteins it binds 23S rRNA. One of the proteins that surrounds the polypeptide exit tunnel on the outside of the ribosome. Forms the main docking site for trigger factor binding to the ribosome. The chain is Large ribosomal subunit protein uL23 from Pseudoalteromonas atlantica (strain T6c / ATCC BAA-1087).